A 283-amino-acid polypeptide reads, in one-letter code: DNA repair protein RecO (283 aa).

Residues 254–264 (SSPASVGSSAT) show a composition bias toward polar residues. The disordered stretch occupies residues 254-283 (SSPASVGSSATRYFAQGDTDENDRDPPGAR).

This sequence belongs to the RecO family.

Its function is as follows. Involved in DNA repair and RecF pathway recombination. The chain is DNA repair protein RecO from Roseiflexus sp. (strain RS-1).